Reading from the N-terminus, the 610-residue chain is Zinc metalloproteinase-disintegrin-like halysase (610 aa).

The N-terminal stretch at 1–20 is a signal peptide; that stretch reads MIQVLLVTICLAVFPYQGSS. The propeptide occupies 21 to 182; it reads IILESGNVND…WESYEPIKKA (162 aa). The Peptidase M12B domain occupies 199–395; sequence KYVKLVMVAD…DMPQCILKKP (197 aa). N-linked (GlcNAc...) asparagine glycosylation is present at N218. Cystine bridges form between C310–C390, C350–C374, and C352–C357. Zn(2+) is bound at residue H335. The active site involves E336. Zn(2+) is bound by residues H339 and H345. Positions 403 to 488 constitute a Disintegrin domain; the sequence is PPVCGNYFVE…AECTDRFQRN (86 aa). The Ca(2+) site is built by V405, N408, F410, E412, E415, and D418. Intrachain disulfides connect C406/C435, C417/C430, C419/C425, C429/C452, C443/C449, C448/C474, C461/C481, C468/C499, C492/C504, C511/C561, C526/C572, C539/C549, C556/C598, and C592/C603. The D/ECD-tripeptide motif lies at 467–469; that stretch reads ECD.

This sequence belongs to the venom metalloproteinase (M12B) family. P-III subfamily. P-IIIa sub-subfamily. In terms of assembly, monomer. It depends on Zn(2+) as a cofactor. As to expression, expressed by the venom gland.

It is found in the secreted. Its activity is regulated as follows. Inhibited by EDTA and EGTA. Not inhibited by PMSF, antipain, pepstatin, and iodoacetamide. In terms of biological role, strongly inhibits the collagen-induced human platelet aggregation (inhibition of alpha-2/beta-1 (ITGA2/ITGB1) integrin). Hydrolyzes the Aalpha-chain of fibrinogen, without cleavage of Bbeta- and gamma-chains. Degrades type IV collagen (but not types I, II and V), fibronectin and vitronectin and also integrins alpha-1/beta-1 (ITGA1/ITGB1) and alpha-5/beta/1 (ITGA5/ITGB1) (but not alpha-V/beta-3 (ITGAV/ITGB3) and alpha-V/beta-5 (ITGAV/ITGB5) integrins). Both metalloproteinase (peptidase M12B) and disintegrin-like domains (recombinantly expressed and named halydin) play characteristic roles to inhibit human platelet aggregation. Induces apoptosis and strongly inhibits proliferation of endothelial cells as well as adhesion of the cells to extracellular matrix proteins. The apoptosis is closely associated with activation of caspase-3 and decreased level of Bcl-X(L)/Bax. Apohalysase, which lacks metalloprotease activity, is also able to induce the apoptosis. Cleaves insulin B chain at '34-His-|-Leu-35', '37-Glu-|-Ala-38', '38-Ala-|-Leu-39', '39-Leu-|-Tyr-40', '40-Tyr-|-Leu-41', '47-Gly-|-Phe-48' and '48-Phe-|-Phe-49' bonds. In Gloydius halys (Chinese water mocassin), this protein is Zinc metalloproteinase-disintegrin-like halysase.